The primary structure comprises 416 residues: Nuclear hormone receptor family member nhr-59 (416 aa).

The nuclear receptor DNA-binding region spans 17–94 (QTFCQVCGQE…IGMDIQNFQF (78 aa)). 2 NR C4-type zinc fingers span residues 20–40 (CQVC…CRAC) and 57–82 (CKDG…LKKC). Positions 162 to 415 (TRLQKLSSSL…FSHPELVKDV (254 aa)) constitute an NR LBD domain.

Belongs to the nuclear hormone receptor family.

The protein resides in the nucleus. Orphan nuclear receptor. The protein is Nuclear hormone receptor family member nhr-59 of Caenorhabditis elegans.